A 399-amino-acid polypeptide reads, in one-letter code: Small ribosomal subunit protein uS3m (399 aa).

It belongs to the universal ribosomal protein uS3 family.

The protein resides in the mitochondrion. Its function is as follows. Essential for mitochondrial protein synthesis and required for the maturation of small ribosomal subunits. This Penicillium urticae protein is Small ribosomal subunit protein uS3m.